Reading from the N-terminus, the 183-residue chain is tRNA-splicing endonuclease (183 aa).

Catalysis depends on residues Tyr-120, His-128, and Lys-159.

This sequence belongs to the tRNA-intron endonuclease family. Archaeal short subfamily. In terms of assembly, homotetramer; although the tetramer contains four active sites, only two participate in the cleavage. Therefore, it should be considered as a dimer of dimers.

It catalyses the reaction pretRNA = a 3'-half-tRNA molecule with a 5'-OH end + a 5'-half-tRNA molecule with a 2',3'-cyclic phosphate end + an intron with a 2',3'-cyclic phosphate and a 5'-hydroxyl terminus.. Its function is as follows. Endonuclease that removes tRNA introns. Cleaves pre-tRNA at the 5'- and 3'-splice sites to release the intron. The products are an intron and two tRNA half-molecules bearing 2',3' cyclic phosphate and 5'-OH termini. Recognizes a pseudosymmetric substrate in which 2 bulged loops of 3 bases are separated by a stem of 4 bp. The polypeptide is tRNA-splicing endonuclease (Pyrobaculum arsenaticum (strain DSM 13514 / JCM 11321 / PZ6)).